We begin with the raw amino-acid sequence, 385 residues long: Hsp70/Hsp90 co-chaperone CNS1 (385 aa).

Residues 1-37 (MSSVNANGGYTKPQKYVPGPGDPELPPQLSEFKDKTS) form a disordered region. TPR repeat units lie at residues 83 to 116 (AENF…ECED), 121 to 154 (ESLY…NPKN), and 155 to 189 (VKCY…DPEN).

It belongs to the TTC4 family. As to quaternary structure, monomer. Component of Hsp70 and Hsp90 chaperone complexes. Interacts (via TPR repeats) with HSC82 and HSP82 (via C-terminal MEEVD pentapeptide). Interacts with CPR7, SSA1 and SPI1.

Its subcellular location is the cytoplasm. Co-chaperone that binds to the molecular chaperones Hsp90 (HSC82 and HSP82) and Hsp70 (SSA1). Stimulates SSA1 ATPase activity, but not Hsp90 ATPase activity. Involved in only a subset of Hsp90 functions. In Saccharomyces cerevisiae (strain ATCC 204508 / S288c) (Baker's yeast), this protein is Hsp70/Hsp90 co-chaperone CNS1 (CNS1).